The following is a 362-amino-acid chain: C-C chemokine receptor type 10 (362 aa).

Residues 1 to 48 (MGTKPTEQVSWGLYSGYDEEAYSVGPLPELCYKADVQAFSRAFQPSVS) are Extracellular-facing. The chain crosses the membrane as a helical span at residues 49 to 69 (LMVAVLGLAGNGLVLATHLAA). Residues 70-80 (RRTTRSPTSVH) lie on the Cytoplasmic side of the membrane. The chain crosses the membrane as a helical span at residues 81 to 101 (LLQLALADLLLALTLPFAAAG). Residues 102 to 115 (ALQGWNLGSTTCRA) lie on the Extracellular side of the membrane. A disulfide bridge links C113 with C191. The chain crosses the membrane as a helical span at residues 116–136 (ISGLYSASFHAGFLFLACISA). Residues 137 to 159 (DRYVAIARALPAGQRPSTPSRAH) are Cytoplasmic-facing. Residues 160 to 180 (LVSVFVWLLSLFLALPALLFS) traverse the membrane as a helical segment. Residues 181–208 (RDGPREGQRRCRLIFPESLTQTVKGASA) lie on the Extracellular side of the membrane. A helical membrane pass occupies residues 209–229 (VAQVVLGFALPLGVMAACYAL). Topologically, residues 230–247 (LGRTLLAARGPERRRALR) are cytoplasmic. The helical transmembrane segment at 248 to 268 (VVVALVVAFVVLQLPYSLALL) threads the bilayer. Residues 269 to 291 (LDTADLLAARERSCSSSKRKDLA) lie on the Extracellular side of the membrane. The helical transmembrane segment at 292–312 (LLVTGGLTLVRCSLNPVLYAF) threads the bilayer. The Cytoplasmic segment spans residues 313–362 (LGLRFRRDLRRLLQGGGCSPKPNPRGRCPRRLRLSSCSAPTETHSLSWDN).

This sequence belongs to the G-protein coupled receptor 1 family. In terms of tissue distribution, expressed at high levels in small intestine, colon, lymph nodes, Peyer patches and at lower levels in thymus, lung and spleen.

The protein resides in the cell membrane. Receptor for chemokines SCYA27 and SCYA28. Subsequently transduces a signal by increasing the intracellular calcium ions level. The sequence is that of C-C chemokine receptor type 10 (Ccr10) from Mus musculus (Mouse).